Here is a 783-residue protein sequence, read N- to C-terminus: Na(+)/H(+) exchanger protein 7 (783 aa).

A helical membrane pass occupies residues 1 to 18; that stretch reads MWIKLLFFFTTLLVSTSG. The Extracellular portion of the chain corresponds to 19–108; it reads LGDDGITALL…WHWDYVKNEL (90 aa). The helical transmembrane segment at 109-129 threads the bilayer; it reads VLTLFFIVIGLFKLVYHHTFV. The Cytoplasmic portion of the chain corresponds to 130–132; it reads TRK. A helical transmembrane segment spans residues 133–153; sequence ILPESCCLIFIGIAIGFFFVG. The Extracellular segment spans residues 154–159; that stretch reads DATHAS. A helical transmembrane segment spans residues 160–180; it reads IKFLEFKSKVFFFYLLPPIIL. Residues 181-206 are Cytoplasmic-facing; sequence ESAYSLKDRAFIENIGTILLYAVVGT. The helical transmembrane segment at 207–227 threads the bilayer; sequence ILNIVLLAAALLILIWVGIMG. The Extracellular segment spans residues 228 to 235; it reads KYNLSVMD. Residues 236–256 form a helical membrane-spanning segment; it reads ILTFASLVAAVDPVAVLAVFQ. The Cytoplasmic portion of the chain corresponds to 257–262; the sequence is EVGVNK. Residues 263-283 form a helical membrane-spanning segment; that stretch reads MLYFMVFGESLFNDAVTIVCY. At 284-299 the chain is on the extracellular side; that stretch reads NLAIEFQTLPDFTWYH. Residues 300–320 form a helical membrane-spanning segment; sequence GFLGLLSFLCVSIGGLIIGLI. Topologically, residues 321–350 are cytoplasmic; it reads CGAISSFVTKFTTDVRVVEPVVLFGMAYLA. The helical transmembrane segment at 351-371 threads the bilayer; it reads YLGSEMFHFSGIIALIACGLF. At 372-390 the chain is on the extracellular side; the sequence is QTHYACCNISYKSFTSVMY. N379 carries an N-linked (GlcNAc...) asparagine glycan. The helical intramembrane region spans 391 to 411; the sequence is ITKVCSTLCESLIFIILGVML. The Extracellular portion of the chain corresponds to 412 to 424; that stretch reads VNEREWFWTDWHP. The helical transmembrane segment at 425–445 threads the bilayer; it reads VFSAVSVVLCVVVRFGVTFFL. The Cytoplasmic segment spans residues 446–464; the sequence is TYFVNQFTGGVRHISFQEQ. Residues 465 to 485 form a helical membrane-spanning segment; sequence FIMSYGGLRGAVSFSLVFMIS. Residues 486–492 are Extracellular-facing; sequence ANPDVKN. The helical transmembrane segment at 493–513 threads the bilayer; the sequence is TMLGATYAVILFTNIIQGSTI. The Cytoplasmic portion of the chain corresponds to 514–783; it reads KLFVKWLNIR…TITESEETSF (270 aa). Positions 649 to 702 form a coiled coil; it reads DNEDADQRANELIKDVSSIRQLMHNPFEDCYLDRNLTHEEEKEQARLKMKKTRA. Residues 745 to 783 form a disordered region; that stretch reads RPSTSTRVSVEDEEQGLTMKEMEEEHPLMTITESEETSF.

The protein belongs to the monovalent cation:proton antiporter 1 (CPA1) transporter (TC 2.A.36) family. In terms of assembly, interacts (via C-terminus) with cmd-1. In terms of tissue distribution, detected in the posterior cells of the intestine.

Its subcellular location is the basolateral cell membrane. In terms of biological role, na+/H+ exchanger which mediates the transient acidification of the coelomic space and plays a role in contraction of posterior body muscles during defecation. Probably by regulating the defecation motor program, required for fatty acid uptake by intestinal cells. The protein is Na(+)/H(+) exchanger protein 7 of Caenorhabditis elegans.